The following is a 279-amino-acid chain: Proteasome subunit beta 2 (279 aa).

Positions 1–53 are cleaved as a propeptide — removed in mature form; by autocatalysis; sequence MAAAFDPSGRFPDLFTSVGTSSFSAFLSKAAPELLPGRRPLPPGMATGLTPHA. The Nucleophile role is filled by Thr54.

Belongs to the peptidase T1B family. In terms of assembly, the 20S proteasome core is composed of 14 alpha and 14 beta subunits that assemble into four stacked heptameric rings, resulting in a barrel-shaped structure. The two inner rings, each composed of seven catalytic beta subunits, are sandwiched by two outer rings, each composed of seven alpha subunits. The catalytic chamber with the active sites is on the inside of the barrel. Has a gated structure, the ends of the cylinder being occluded by the N-termini of the alpha-subunits. Is capped by the proteasome-associated ATPase, ARC.

Its subcellular location is the cytoplasm. It carries out the reaction Cleavage of peptide bonds with very broad specificity.. The protein operates within protein degradation; proteasomal Pup-dependent pathway. With respect to regulation, the formation of the proteasomal ATPase ARC-20S proteasome complex, likely via the docking of the C-termini of ARC into the intersubunit pockets in the alpha-rings, may trigger opening of the gate for substrate entry. Interconversion between the open-gate and close-gate conformations leads to a dynamic regulation of the 20S proteasome proteolysis activity. In terms of biological role, component of the proteasome core, a large protease complex with broad specificity involved in protein degradation. The protein is Proteasome subunit beta 2 of Salinispora tropica (strain ATCC BAA-916 / DSM 44818 / JCM 13857 / NBRC 105044 / CNB-440).